Reading from the N-terminus, the 469-residue chain is Reticulon-2 (469 aa).

Disordered stretches follow at residues 1 to 180 and 201 to 238; these read MGQV…EASE and LTPQLSPSSGIPQAHTPSPQRSQDLNTGPDEPLPNGEG. The segment covering 14–25 has biased composition (low complexity); the sequence is APSTASSTPDST. Residues 32-43 are compositionally biased toward basic and acidic residues; the sequence is SDFRELHTAREF. Serine 44 is modified (phosphoserine). Positions 135–144 are enriched in basic and acidic residues; sequence RPLEELRLRL. Composition is skewed to polar residues over residues 159-168 and 203-226; these read DSATSSSTPL and PQLSPSSGIPQAHTPSPQRSQDLN. The 200-residue stretch at 270–469 folds into the Reticulon domain; that stretch reads VADLLYWKDT…SVSGSKAKAE (200 aa). A run of 2 helical transmembrane segments spans residues 293-313 and 388-408; these read LLCLLHFSIVSVAAHLALLGL and LLFYILTFVGAIFNGLTLVIL.

As to quaternary structure, interacts with SPAST. Interacts with BACE1. Interacts (via first transmembrane domain) with ARL6IP5/GTRAP3-18. Interacts (via N-terminus) with SLC1A1/EAAC1; the interaction promotes cell surface expression of SLC1A1. As to expression, expressed in brain and spinal cord (at protein level). In the embryonic brain cortex, expressed in neurons but not in astrocytes (at protein level).

It is found in the endoplasmic reticulum membrane. The protein resides in the sarcoplasmic reticulum membrane. Its subcellular location is the cell membrane. The protein localises to the sarcolemma. It localises to the T-tubule. It is found in the cytoplasm. The protein resides in the myofibril. Its subcellular location is the sarcomere. The protein localises to the z line. It localises to the cytoskeleton. In terms of biological role, inhibits amyloid precursor protein processing, probably by blocking BACE1 activity. Enhances trafficking of the glutamate transporter SLC1A1/EAAC1 from the endoplasmic reticulum to the cell surface. Plays a role in the translocation of SLC2A4/GLUT4 from intracellular membranes to the cell membrane which facilitates the uptake of glucose into the cell. The protein is Reticulon-2 of Rattus norvegicus (Rat).